Here is a 115-residue protein sequence, read N- to C-terminus: Ribonuclease P protein component (115 aa).

This sequence belongs to the RnpA family. Consists of a catalytic RNA component (M1 or rnpB) and a protein subunit.

It carries out the reaction Endonucleolytic cleavage of RNA, removing 5'-extranucleotides from tRNA precursor.. RNaseP catalyzes the removal of the 5'-leader sequence from pre-tRNA to produce the mature 5'-terminus. It can also cleave other RNA substrates such as 4.5S RNA. The protein component plays an auxiliary but essential role in vivo by binding to the 5'-leader sequence and broadening the substrate specificity of the ribozyme. The chain is Ribonuclease P protein component from Baumannia cicadellinicola subsp. Homalodisca coagulata.